A 221-amino-acid polypeptide reads, in one-letter code: Uracil-DNA glycosylase (221 aa).

D65 functions as the Proton acceptor in the catalytic mechanism.

It belongs to the uracil-DNA glycosylase (UDG) superfamily. UNG family.

It is found in the cytoplasm. It carries out the reaction Hydrolyzes single-stranded DNA or mismatched double-stranded DNA and polynucleotides, releasing free uracil.. Functionally, excises uracil residues from the DNA which can arise as a result of misincorporation of dUMP residues by DNA polymerase or due to deamination of cytosine. The polypeptide is Uracil-DNA glycosylase (Flavobacterium johnsoniae (strain ATCC 17061 / DSM 2064 / JCM 8514 / BCRC 14874 / CCUG 350202 / NBRC 14942 / NCIMB 11054 / UW101) (Cytophaga johnsonae)).